The primary structure comprises 1581 residues: MKAQGETEESEKLSKMSSLLERLHAKFNQNRPWSETIKLVRQVMEKRVVMSSGGHQHLVSCLETLQKALKVTSLPAMTDRLESIARQNGLGSHLSASGTECYITSDMFYVEVQLDPAGQLCDVKVAHHGENPVSCPELVQQLREKNFDEFSKHLKGLVNLYNLPGDNKLKTKMYLALQSLEQDLSKMAIMYWKATNAGPLDKILHGSVGYLTPRSGGHLMNLKYYVSPSDLLDDKTASPIILHENNVSRSLGMNASVTIEGTSAVYKLPIAPLIMGSHPVDNKWTPSFSSITSANSVDLPACFFLKFPQPIPVSRAFVQKLQNCTGIPLFETQPTYAPLYELITQFELSKDPDPIPLNHNMRFYAALPGQQHCYFLNKDAPLPDGRSLQGTLVSKITFQHPGRVPLILNLIRHQVAYNTLIGSCVKRTILKEDSPGLLQFEVCPLSESRFSVSFQHPVNDSLVCVVMDVQDSTHVSCKLYKGLSDALICTDDFIAKVVQRCMSIPVTMRAIRRKAETIQADTPALSLIAETVEDMVKKNLPPASSPGYGMTTGNNPMSGTTTPTNTFPGGPITTLFNMSMSIKDRHESVGHGEDFSKVSQNPILTSLLQITGNGGSTIGSSPTPPHHTPPPVSSMAGNTKNHPMLMNLLKDNPAQDFSTLYGSSPLERQNSSSGSPRMEICSGSNKTKKKKSSRLPPEKPKHQTEDDFQRELFSMDVDSQNPIFDVNMTADTLDTPHITPAPSQCSTPPTTYPQPVPHPQPSIQRMVRLSSSDSIGPDVTDILSDIAEEASKLPSTSDDCPAIGTPLRDSSSSGHSQSTLFDSDVFQTNNNENPYTDPADLIADAAGSPSSDSPTNHFFHDGVDFNPDLLNSQSQSGFGEEYFDESSQSGDNDDFKGFASQALNTLGVPMLGGDNGETKFKGNNQADTVDFSIISVAGKALAPADLMEHHSGSQGPLLTTGDLGKEKTQKRVKEGNGTSNSTLSGPGLDSKPGKRSRTPSNDGKSKDKPPKRKKADTEGKSPSHSSSNRPFTPPTSTGGSKSPGSAGRSQTPPGVATPPIPKITIQIPKGTVMVGKPSSHSQYTSSGSVSSSGSKSHHSHSSSSSSSASTSGKMKSSKSEGSSSSKLSSSMYSSQGSSGSSQSKNSSQSGGKPGSSPITKHGLSSGSSSTKMKPQGKPSSLMNPSLSKPNISPSHSRPPGGSDKLASPMKPVPGTPPSSKAKSPISSGSGGSHMSGTSSSSGMKSSSGLGSSGSLSQKTPPSSNSCTASSSSFSSSGSSMSSSQNQHGSSKGKSPSRNKKPSLTAVIDKLKHGVVTSGPGGEDPLDGQMGVSTNSSSHPMSSKHNMSGGEFQGKREKSDKDKSKVSTSGSSVDSSKKTSESKNVGSTGVAKIIISKHDGGSPSIKAKVTLQKPGESSGEGLRPQMASSKNYGSPLISGSTPKHERGSPSHSKSPAYTPQNLDSESESGSSIAEKSYQNSPSSDDGIRPLPEYSTEKHKKHKKEKKKVKDKDRDRDRDKDRDKKKSHSIKPESWSKSPISSDQSLSMTSNTILSADRPSRLSPDFMIGEEDDDLMDVALIGN.

The segment at 1–670 (MKAQGETEES…YGSSPLERQN (670 aa)) is interaction with the Mediator complex and THRA. The segment at 16-590 (MSSLLERLHA…SIKDRHESVG (575 aa)) is interaction with ESR1. 2 interaction with the Mediator complex regions span residues 108 to 212 (FYVE…GYLT) and 215 to 390 (SGGH…SLQG). The interaction with THRA stretch occupies residues 405-644 (PLILNLIRHQ…MAGNTKNHPM (240 aa)). Residues 542–789 (PASSPGYGMT…TDILSDIAEE (248 aa)) form an interaction with VDR region. S588 bears the Phosphoserine mark. Positions 604 to 608 (LTSLL) match the LXXLL motif 1 motif. Disordered regions lie at residues 609–705 (QITG…HQTE), 792–820 (KLPS…QSTL), 874–893 (SQSG…GDND), and 948–1566 (EHHS…DFMI). Positions 622 to 632 (PTPPHHTPPPV) are enriched in pro residues. An interaction with PPARGC1A and THRA region spans residues 622 to 701 (PTPPHHTPPP…SSRLPPEKPK (80 aa)). The short motif at 645–649 (LMNLL) is the LXXLL motif 2 element. Over residues 655 to 675 (QDFSTLYGSSPLERQNSSSGS) the composition is skewed to polar residues. The interval 656-1066 (DFSTLYGSSP…TPPIPKITIQ (411 aa)) is interaction with ESR1. S664 bears the Phosphoserine mark. The interaction with GATA1 stretch occupies residues 681-715 (CSGSNKTKKKKSSRLPPEKPKHQTEDDFQRELFSM). Basic and acidic residues predominate over residues 696 to 705 (PPEKPKHQTE). A Phosphoserine modification is found at S795. A Phosphothreonine modification is found at T805. The segment covering 808–820 (RDSSSSGHSQSTL) has biased composition (polar residues). The Integrase domain-binding motif (IBM) signature appears at 875 to 902 (QSGFGEEYFDESSQSGDNDDFKGFASQA). S887 and S953 each carry phosphoserine. Residues 963–974 (LGKEKTQKRVKE) are compositionally biased toward basic and acidic residues. T1032 is subject to Phosphothreonine; by MAPK1 or MAPK3. A compositionally biased stretch (low complexity) spans 1034-1045 (PTSTGGSKSPGS). T1051 and T1057 each carry phosphothreonine. Low complexity-rich tracts occupy residues 1078 to 1094 (SSHS…SSGS) and 1101 to 1156 (SSSS…PGSS). Residue S1156 is modified to Phosphoserine. Residues 1162-1195 (GLSSGSSSTKMKPQGKPSSLMNPSLSKPNISPSH) are compositionally biased toward polar residues. Residue K1177 is modified to N6-acetyllysine. S1207 is subject to Phosphoserine. At T1215 the chain carries Phosphothreonine. 2 stretches are compositionally biased toward low complexity: residues 1218 to 1227 (SSKAKSPISS) and 1234 to 1293 (MSGT…SKGK). S1223 carries the post-translational modification Phosphoserine. Residues 1249–1421 (LGSSGSLSQK…KPGESSGEGL (173 aa)) form an interaction with TP53 region. S1302 is subject to Phosphoserine. The segment covering 1330–1345 (GVSTNSSSHPMSSKHN) has biased composition (polar residues). S1347 carries the phosphoserine modification. A compositionally biased stretch (basic and acidic residues) spans 1352-1364 (QGKREKSDKDKSK). Phosphoserine is present on residues S1403 and S1433. 2 stretches are compositionally biased toward polar residues: residues 1425-1440 (MASS…SGST) and 1448-1482 (PSHS…SPSS). T1440 carries the phosphothreonine modification. T1457 carries the post-translational modification Phosphothreonine; by MAPK1 or MAPK3. A phosphoserine mark is found at S1463, S1465, S1479, S1481, and S1482. Residues 1496-1505 (KHKKHKKEKK) show a composition bias toward basic residues. The span at 1506 to 1522 (KVKDKDRDRDRDKDRDK) shows a compositional bias: basic and acidic residues. At K1529 the chain carries N6-acetyllysine. The span at 1533-1552 (WSKSPISSDQSLSMTSNTIL) shows a compositional bias: polar residues.

This sequence belongs to the Mediator complex subunit 1 family. In terms of assembly, component of the Mediator complex, which is composed of MED1, MED4, MED6, MED7, MED8, MED9, MED10, MED11, MED12, MED13, MED13L, MED14, MED15, MED16, MED17, MED18, MED19, MED20, MED21, MED22, MED23, MED24, MED25, MED26, MED27, MED29, MED30, MED31, CCNC, CDK8 and CDC2L6/CDK11. The MED12, MED13, CCNC and CDK8 subunits form a distinct module termed the CDK8 module. Mediator containing the CDK8 module is less active than Mediator lacking this module in supporting transcriptional activation. Individual preparations of the Mediator complex lacking one or more distinct subunits have been variously termed ARC, CRSP, DRIP, PC2, SMCC and TRAP. This subunit specifically interacts with a number of nuclear receptors in a ligand-dependent fashion including AR, ESR1, ESR2, PPARA, PPARG, RORA, RXRA, RXRG, THRA, THRB and VDR. Interacts with CTNNB1, GABPA, GLI3, PPARGC1A and TP53. Interacts with YWHAH. Interacts with CLOCK; this interaction requires the presence of THRAP3. Interacts with GATA1 and CCAR1. Interacts with NR4A3. Interacts (via IBM motif) with PSIP1 (via IBD domain); phosphorylation increases its affinity for PSIP1. Interacts with USP22. Phosphorylated by MAPK1 or MAPK3 during G2/M phase which may enhance protein stability and promote entry into the nucleolus. Phosphorylation increases its interaction with PSIP1. As to expression, ubiquitously expressed.

It localises to the nucleus. In terms of biological role, component of the Mediator complex, a coactivator involved in the regulated transcription of nearly all RNA polymerase II-dependent genes. Mediator functions as a bridge to convey information from gene-specific regulatory proteins to the basal RNA polymerase II transcription machinery. Mediator is recruited to promoters by direct interactions with regulatory proteins and serves as a scaffold for the assembly of a functional preinitiation complex with RNA polymerase II and the general transcription factors. Acts as a coactivator for GATA1-mediated transcriptional activation during erythroid differentiation of K562 erythroleukemia cells. This chain is Mediator of RNA polymerase II transcription subunit 1 (MED1), found in Homo sapiens (Human).